The chain runs to 119 residues: Amicyanin-alpha (119 aa).

An N-terminal signal peptide occupies residues 1–20 (MRALAFAAALAAFSATAALA). The Plastocyanin-like domain maps to 21–119 (AGALEAVQEA…PFMKGKVVVE (99 aa)). 4 residues coordinate Cu cation: His-67, Cys-106, His-109, and Met-112.

The cofactor is Cu cation.

The protein resides in the periplasm. The protein operates within one-carbon metabolism; methylamine degradation. Functionally, primary acceptor of electrons from methylamine dehydrogenase. Passes those electrons on either a soluble cytochrome c or to pseudoazurin. The protein is Amicyanin-alpha (mauC) of Methylorubrum extorquens (strain ATCC 14718 / DSM 1338 / JCM 2805 / NCIMB 9133 / AM1) (Methylobacterium extorquens).